A 375-amino-acid chain; its full sequence is Enoyl-[acyl-carrier-protein] reductase, mitochondrial (375 aa).

The N-terminal 37 residues, 1–37 (MAALMESVVGRALKFSSTANFRSIRRGETPTLCIKSF), are a transit peptide targeting the mitochondrion. Tyr-96 serves as the catalytic Proton donor. NADP(+) is bound by residues Asn-169, 195 to 198 (TSIV), 218 to 220 (RDR), 287 to 290 (YGGM), 312 to 314 (FWL), and Lys-370.

It belongs to the zinc-containing alcohol dehydrogenase family. Quinone oxidoreductase subfamily. As to quaternary structure, homodimer.

It localises to the mitochondrion. It catalyses the reaction a 2,3-saturated acyl-[ACP] + NADP(+) = a (2E)-enoyl-[ACP] + NADPH + H(+). Its function is as follows. Catalyzes the NADPH-dependent reduction of trans-2-enoyl thioesters in mitochondrial fatty acid synthesis (fatty acid synthesis type II). Fatty acid chain elongation in mitochondria uses acyl carrier protein (ACP) as an acyl group carrier, but the enzyme accepts both ACP and CoA thioesters as substrates in vitro. In Arabidopsis thaliana (Mouse-ear cress), this protein is Enoyl-[acyl-carrier-protein] reductase, mitochondrial.